We begin with the raw amino-acid sequence, 172 residues long: UBA-like domain-containing protein 2 (172 aa).

Positions 118–130 (PPNQQPVWLPPSS) are enriched in pro residues. Residues 118 to 172 (PPNQQPVWLPPSSPTGHHTLHHHHHHMHPPPSWPPVSQPANGPQTPVISALHGQR) are disordered. Positions 135 to 145 (HTLHHHHHHMH) are enriched in basic residues.

The protein belongs to the UBALD family.

The polypeptide is UBA-like domain-containing protein 2 (ubald2) (Danio rerio (Zebrafish)).